Reading from the N-terminus, the 229-residue chain is RNA chaperone ProQ (229 aa).

The tract at residues 105 to 178 is disordered; it reads EAKARVQAQR…PREEKHTPVS (74 aa). Over residues 117 to 136 the composition is skewed to basic and acidic residues; it reads QQAKKREAAAAAGDKESAPR. Basic residues predominate over residues 137–146; the sequence is RERKPRPAAP. The span at 147–176 shows a compositional bias: basic and acidic residues; sequence RRKEGAERKPRAEKPAAKAPRAPREEKHTP.

It belongs to the ProQ family.

It is found in the cytoplasm. RNA chaperone with significant RNA binding, RNA strand exchange and RNA duplexing activities. May regulate ProP activity through an RNA-based, post-transcriptional mechanism. The polypeptide is RNA chaperone ProQ (Escherichia fergusonii (strain ATCC 35469 / DSM 13698 / CCUG 18766 / IAM 14443 / JCM 21226 / LMG 7866 / NBRC 102419 / NCTC 12128 / CDC 0568-73)).